The primary structure comprises 600 residues: Glutamine--fructose-6-phosphate aminotransferase [isomerizing] (600 aa).

The Nucleophile; for GATase activity role is filled by cysteine 2. The Glutamine amidotransferase type-2 domain occupies 2–217; sequence CGIVGFIGEQ…DKEIVIVMKE (216 aa). SIS domains are found at residues 283 to 422 and 452 to 590; these read IRNA…AKGE and LAKQ…VDKP. Catalysis depends on lysine 595, which acts as the For Fru-6P isomerization activity.

As to quaternary structure, homodimer.

The protein localises to the cytoplasm. The enzyme catalyses D-fructose 6-phosphate + L-glutamine = D-glucosamine 6-phosphate + L-glutamate. Catalyzes the first step in hexosamine metabolism, converting fructose-6P into glucosamine-6P using glutamine as a nitrogen source. This chain is Glutamine--fructose-6-phosphate aminotransferase [isomerizing], found in Bacillus thuringiensis subsp. konkukian (strain 97-27).